Here is a 338-residue protein sequence, read N- to C-terminus: MFSELLKKIVSGQDLAEDETTTMMDAIMSGEVEVPAIAAFMAALATKGETFTELAGAARSMRRKATRIQVSSNTVVDTCGTGGDGASTFNISTTSAFVVAGCGVTVAKHGNRSVSSKCGSADVLEALGVKLDTHPEVVEQGIEEIGIGFLFAPMYHSAMRFAMPARQAVGIRSIFNMLGPLTNPAGANCQLLGVYDPKLTEMFAEALKLLGARKAYVVHGHDGLDEISICAPTRVSELAEGMVRTFDILPEQLNIEACDISELAGGDAEENAGITKSILEGTPGPKQDVVVVNAGAALVAAGVAEDFKDGMAKAKEAIQSGAALGKLEALVKFTQENG.

Residues Gly-80, Gly-83 to Asp-84, Thr-88, Asn-90 to Thr-93, Lys-108 to Ser-116, and Ser-120 each bind 5-phospho-alpha-D-ribose 1-diphosphate. Position 80 (Gly-80) interacts with anthranilate. Ser-92 contributes to the Mg(2+) binding site. Residue Asn-111 participates in anthranilate binding. Arg-166 contributes to the anthranilate binding site. Mg(2+) is bound by residues Asp-225 and Glu-226.

This sequence belongs to the anthranilate phosphoribosyltransferase family. As to quaternary structure, homodimer. It depends on Mg(2+) as a cofactor.

The catalysed reaction is N-(5-phospho-beta-D-ribosyl)anthranilate + diphosphate = 5-phospho-alpha-D-ribose 1-diphosphate + anthranilate. It participates in amino-acid biosynthesis; L-tryptophan biosynthesis; L-tryptophan from chorismate: step 2/5. In terms of biological role, catalyzes the transfer of the phosphoribosyl group of 5-phosphorylribose-1-pyrophosphate (PRPP) to anthranilate to yield N-(5'-phosphoribosyl)-anthranilate (PRA). This chain is Anthranilate phosphoribosyltransferase, found in Desulfatibacillum aliphaticivorans.